We begin with the raw amino-acid sequence, 351 residues long: UDP-N-acetylenolpyruvoylglucosamine reductase (351 aa).

The FAD-binding PCMH-type domain occupies 25 to 196; sequence HIQAQARWLL…TAVEFRLPLL (172 aa). R173 is an active-site residue. Catalysis depends on S246, which acts as the Proton donor. E343 is a catalytic residue.

It belongs to the MurB family. Requires FAD as cofactor.

It localises to the cytoplasm. It catalyses the reaction UDP-N-acetyl-alpha-D-muramate + NADP(+) = UDP-N-acetyl-3-O-(1-carboxyvinyl)-alpha-D-glucosamine + NADPH + H(+). It participates in cell wall biogenesis; peptidoglycan biosynthesis. Functionally, cell wall formation. This is UDP-N-acetylenolpyruvoylglucosamine reductase from Xylella fastidiosa (strain M23).